The primary structure comprises 195 residues: Type II secretion system protein J (195 aa).

Residues Met1–Gly7 constitute a propeptide, leader sequence. Phe8 is modified (N-methylphenylalanine). Residues Phe8 to Met29 form a helical membrane-spanning segment.

The protein belongs to the GSP J family. Type II secretion is composed of four main components: the outer membrane complex, the inner membrane complex, the cytoplasmic secretion ATPase and the periplasm-spanning pseudopilus. Interacts with core component GspG. In terms of processing, cleaved by prepilin peptidase. Post-translationally, methylated by prepilin peptidase at the amino group of the N-terminal phenylalanine once the leader sequence is cleaved by prepilin peptidase.

The protein localises to the cell inner membrane. Functionally, component of the type II secretion system required for the energy-dependent secretion of extracellular factors such as proteases and toxins from the periplasm. Part of the pseudopilus tip complex that is critical for the recognition and binding of secretion substrates. The polypeptide is Type II secretion system protein J (gspJ) (Escherichia coli (strain K12)).